The primary structure comprises 127 residues: Protein ApaG (127 aa).

One can recognise an ApaG domain in the interval 3-127; the sequence is DDPRYRVEVE…FVLSVPRTLH (125 aa).

This chain is Protein ApaG, found in Xanthomonas oryzae pv. oryzae (strain MAFF 311018).